We begin with the raw amino-acid sequence, 205 residues long: Thymidylate kinase (205 aa).

9–16 (GPEGSGKT) provides a ligand contact to ATP.

Belongs to the thymidylate kinase family.

It carries out the reaction dTMP + ATP = dTDP + ADP. Phosphorylation of dTMP to form dTDP in both de novo and salvage pathways of dTTP synthesis. The protein is Thymidylate kinase of Staphylococcus aureus (strain MSSA476).